Consider the following 140-residue polypeptide: MEMKARGLRIPLLLLLVTVVVMAKVNHIQRWGGFKEKAMSKKNINSTLHFFIRSYNNASNDTYLYQVQKLIQGQMQLTTGVEYLVTVKIGRTKCKKNETKKASCPLQSSKLKKSLICKSLIYSVPWMNYYQLWNNSCQES.

The signal sequence occupies residues 1–23 (MEMKARGLRIPLLLLLVTVVVMA). The region spanning 32 to 126 (GGFKEKAMSK…CKSLIYSVPW (95 aa)) is the Cystatin domain. A glycan (N-linked (GlcNAc...) asparagine) is linked at Asn-45. Cystine bridges form between Cys-94-Cys-104 and Cys-117-Cys-137.

It belongs to the cystatin family. As to expression, highly expressed in testis where it localizes to spermatogonium, spermatocyes and round spermatids. Not detected in spermatozoa. Also detected in epididymis, cerebrum and pituitary.

It localises to the secreted. In Mus musculus (Mouse), this protein is Cystatin-like 1.